The following is an 886-amino-acid chain: MRAEEPCAPGAPSALGAQRTPGPELRLSSQLLPELCTFVVRVLFYLGPVYLAGYLGLSITWLLLGALLWMWWRRNRRGKLGRLAAAFEFLDNEREFISRELRGQHLPAWIHFPDVERVEWANKIISQTWPYLSMIMESKFREKLEPKIREKSIHLRTFTFTKLYFGQKCPRVNGVKAHTNTCNRRRVTVDLQICYIGDCEISVELQKIQAGVNGIQLQGTLRVILEPLLVDKPFVGAVTVFFLQKPHLQINWTGLTNLLDAPGINDVSDSLLEDLIATHLVLPNRVTVPVKKGLDLTNLRFPLPCGVIRVHLLEAEQLAQKDNFLGLRGKSDPYAKVSIGLQHFRSRTIYRNLNPTWNEVFEFMVYEVPGQDLEVDLYDEDTDRDDFLGSLQICLGDVMTNRVVDEWFVLNDTTSGRLHLRLEWLSLLTDQEVLTEDHGGLSTAILVVFLESACNLPRNPFDYLNGEYRAKKLSRFARNKVSKDPSSYVKLSVGKKTHTSKTCPHNKDPVWSQVFSFFVHNVATERLHLKVLDDDQECALGMLEVPLCQILPYADLTLEQRFQLDHSGLDSLISMRLVLRFLQVEERELGSPYTGPEALKKGPLLIKKVATNQGPKAQPQEEGPTDLPCPPDPASDTKDVSRSTTTTTSATTVATEPTSQETGPEPKGKDSAKRFCEPIGEKKSPATIFLTVPGPHSPGPIKSPRPMKCPASPFAWPPKRLAPSMSSLNSLASSCFDLADISLNIEGGDLRRRQLGEIQLTVRYVCLRRCLSVLINGCRNLTPCTSSGADPYVRVYLLPERKWACRKKTSVKRKTLEPLFDETFEFFVPMEEVKKRSLDVAVKNSRPLGSHRRKELGKVLIDLSKEDLIKGFSQWYELTPNGQPRS.

The disordered stretch occupies residues 1 to 21 (MRAEEPCAPGAPSALGAQRTP). The Cytoplasmic segment spans residues 1–29 (MRAEEPCAPGAPSALGAQRTPGPELRLSS). 2 helical membrane passes run 30-50 (QLLP…GPVY) and 51-71 (LAGY…LWMW). Topologically, residues 72-886 (WRRNRRGKLG…ELTPNGQPRS (815 aa)) are cytoplasmic. Residues 114–291 (DVERVEWANK…LPNRVTVPVK (178 aa)) form the SMP-LTD domain. C2 domains lie at 291–408 (KKGL…DEWF) and 426–566 (SLLT…QLDH). 9 residues coordinate Ca(2+): Lys-321, Asp-322, Asp-332, Asp-379, Glu-380, Asp-381, Asp-383, Asp-385, and Asp-386. Residues 613–673 (QGPKAQPQEE…PEPKGKDSAK (61 aa)) form a disordered region. The span at 642–659 (RSTTTTTSATTVATEPTS) shows a compositional bias: low complexity. The span at 664–673 (PEPKGKDSAK) shows a compositional bias: basic and acidic residues. Residues 754-876 (QLGEIQLTVR…DLIKGFSQWY (123 aa)) form the C2 3 domain. The tract at residues 801–808 (RKWACRKK) is required for phosphatidylinositol 4,5-bisphosphate-dependent location at the cell membrane.

Belongs to the extended synaptotagmin family. In terms of assembly, interacts with ESYT1 and ESYT2. In terms of tissue distribution, widely expressed with high level in cerebellum and skin.

Its subcellular location is the cell membrane. It localises to the endoplasmic reticulum membrane. In terms of biological role, binds glycerophospholipids in a barrel-like domain and may play a role in cellular lipid transport. Tethers the endoplasmic reticulum to the cell membrane and promotes the formation of appositions between the endoplasmic reticulum and the cell membrane. The protein is Extended synaptotagmin-3 of Homo sapiens (Human).